We begin with the raw amino-acid sequence, 100 residues long: Urease subunit gamma (100 aa).

The protein belongs to the urease gamma subunit family. In terms of assembly, heterotrimer of UreA (gamma), UreB (beta) and UreC (alpha) subunits. Three heterotrimers associate to form the active enzyme.

The protein resides in the cytoplasm. It catalyses the reaction urea + 2 H2O + H(+) = hydrogencarbonate + 2 NH4(+). It participates in nitrogen metabolism; urea degradation; CO(2) and NH(3) from urea (urease route): step 1/1. The protein is Urease subunit gamma of Prochlorococcus marinus (strain MIT 9301).